Consider the following 193-residue polypeptide: Bcl-2-binding component 3, isoforms 1/2 (193 aa).

Disordered stretches follow at residues 1-28 and 71-138; these read MARARQEGSSPEPVEGLARDGPRPFPLG and ALGG…REIG. Residue S10 is modified to Phosphoserine. Residues 71-82 show a composition bias toward low complexity; that stretch reads ALGGSRWPGGPR. Residues 137 to 151 carry the BH3 motif; it reads IGAQLRRMADDLNAQ.

This sequence belongs to the Bcl-2 family. In terms of assembly, interacts with MCL1 and BCL2A1. Interacts (via BH3 domain) with BCL2. Interacts with BCL2L1/BCL-XL. Interacts (via BH3 domain) with NOL3/ARC (via CARD domain); this interaction prevents BBC3 association with BCL2 and results in CASP8 activation. Ubiquitously expressed.

The protein localises to the mitochondrion. In terms of biological role, essential mediator of p53/TP53-dependent and p53/TP53-independent apoptosis. Promotes partial unfolding of BCL2L1 and dissociation of BCL2L1 from p53/TP53, releasing the bound p53/TP53 to induce apoptosis. Regulates ER stress-induced neuronal apoptosis. The chain is Bcl-2-binding component 3, isoforms 1/2 (BBC3) from Homo sapiens (Human).